The chain runs to 581 residues: Zinc finger protein 674 (581 aa).

Residues 8–79 (LTFKDVFVDF…DGGTPVRTCA (72 aa)) form the KRAB domain. 4 consecutive C2H2-type zinc fingers follow at residues 224-246 (YKCTECGKVFIQKANLVVHQRTH), 252-274 (YECCECAKAFSQKSTLIAHQRTH), 280-302 (YECSECGKTFIQKSTLIKHQRTH), and 308-330 (FVCDKCPKAFKSSYHLIRHEKTH). Over residues 357-371 (PQCSEHGKASDEKPS) the composition is skewed to basic and acidic residues. The interval 357-377 (PQCSEHGKASDEKPSPTKHWR) is disordered. 7 consecutive C2H2-type zinc fingers follow at residues 385–407 (YECSKCGKSFRGKSHLSVHQRIH), 413–435 (YECSICGKTFSGKSHLSVHHRTH), 441–463 (YECRRCGKAFGEKSTLIVHQRMH), 469–491 (YKCNECGKAFSEKSPLIKHQRIH), 497–519 (YECTDCKKAFSRKSTLIKHQRIH), 525–547 (YKCSECGKAFSVKSTLIVHHRTH), and 553–575 (YECRDCGKAFSGKSTLIKHQRSH).

The protein belongs to the krueppel C2H2-type zinc-finger protein family. Expressed in testis.

The protein localises to the nucleus. In terms of biological role, may be involved in transcriptional regulation. The polypeptide is Zinc finger protein 674 (ZNF674) (Homo sapiens (Human)).